The sequence spans 446 residues: L-2-hydroxyglutarate dehydrogenase, mitochondrial (446 aa).

A mitochondrion-targeting transit peptide spans 1–28 (MKNSSSMLKGVKSFIGSGIYTNKPIYDV).

The protein belongs to the L2HGDH family. The cofactor is FAD.

The protein localises to the mitochondrion. The catalysed reaction is (S)-2-hydroxyglutarate + A = 2-oxoglutarate + AH2. The sequence is that of L-2-hydroxyglutarate dehydrogenase, mitochondrial (l2hgdh) from Dictyostelium discoideum (Social amoeba).